Consider the following 1009-residue polypeptide: Rho-type GTPase-activating protein 2 (1009 aa).

LIM zinc-binding domains are found at residues Ser11–Asp68 and Lys69–Lys129. Residues Lys143 to Val155 show a composition bias toward basic and acidic residues. 5 disordered regions span residues Lys143–Ser228, Thr358–Ser433, Thr449–Asp608, Thr664–Lys709, and Gln723–Pro780. Positions Thr162–Val196 are enriched in polar residues. Residues Asp212–Ser222 show a composition bias toward basic and acidic residues. Composition is skewed to polar residues over residues Lys363–Thr385 and Leu399–Asp414. The segment covering Asn481–Pro491 has biased composition (basic residues). 2 stretches are compositionally biased toward polar residues: residues Ser493–Asn510 and Gln522–Gly553. Residues Thr664–Glu682 are compositionally biased toward basic and acidic residues. Polar residues-rich tracts occupy residues Asn683–Ser707 and Glu728–Ile749. Ser763 carries the post-translational modification Phosphoserine. In terms of domain architecture, Rho-GAP spans Ser788–Phe1006.

GTPase-activating protein (GAP) for CDC42 and/or RHO1. The protein is Rho-type GTPase-activating protein 2 (RGA2) of Saccharomyces cerevisiae (strain ATCC 204508 / S288c) (Baker's yeast).